A 273-amino-acid chain; its full sequence is Ribosomal RNA small subunit methyltransferase A (273 aa).

S-adenosyl-L-methionine is bound by residues N18, L20, G45, E66, D91, and N113.

It belongs to the class I-like SAM-binding methyltransferase superfamily. rRNA adenine N(6)-methyltransferase family. RsmA subfamily.

Its subcellular location is the cytoplasm. The enzyme catalyses adenosine(1518)/adenosine(1519) in 16S rRNA + 4 S-adenosyl-L-methionine = N(6)-dimethyladenosine(1518)/N(6)-dimethyladenosine(1519) in 16S rRNA + 4 S-adenosyl-L-homocysteine + 4 H(+). In terms of biological role, specifically dimethylates two adjacent adenosines (A1518 and A1519) in the loop of a conserved hairpin near the 3'-end of 16S rRNA in the 30S particle. May play a critical role in biogenesis of 30S subunits. The protein is Ribosomal RNA small subunit methyltransferase A of Shigella boydii serotype 4 (strain Sb227).